Here is a 984-residue protein sequence, read N- to C-terminus: Zinc finger and BTB domain-containing protein 4 (984 aa).

A BTB domain is found at 30–131 (CDVTLIAGDT…IYSARLALPG (102 aa)). Residue K40 forms a Glycyl lysine isopeptide (Lys-Gly) (interchain with G-Cter in SUMO2) linkage. Disordered regions lie at residues 71–104 (TGGS…PPRV), 172–210 (MVTS…RRPF), and 227–262 (THEA…ASAL). Residues 74–88 (SAPSPATTTAASSSS) show a composition bias toward low complexity. Residues 165–324 (VPPAPSSMVT…CRYCEKVFAL (160 aa)) form an interaction with CBFA2T3 region. The C2H2-type 1; atypical zinc finger occupies 210-232 (FPCPRCGKSFIHPKRLQTHEAQC). Positions 242 to 255 (AGLGPGGSGPGGPA) are enriched in gly residues. 3 C2H2-type zinc fingers span residues 285 to 307 (YVCA…SNVH), 313 to 335 (YPCR…EVWH), and 341 to 364 (YQCI…RAFH). Phosphoserine is present on S367. The tract at residues 461 to 575 (GSSSSGAAGG…GSSQLQAPPP (115 aa)) is disordered. Over residues 467–477 (AAGGGPVGTGG) the composition is skewed to gly residues. Low complexity-rich tracts occupy residues 478 to 488 (SQAASVITYTT) and 507 to 529 (ATPT…ATAT). K548 participates in a covalent cross-link: Glycyl lysine isopeptide (Lys-Gly) (interchain with G-Cter in SUMO2). Residues 552 to 565 (GVSGSGGSPTGTGR) show a composition bias toward gly residues. K590 is covalently cross-linked (Glycyl lysine isopeptide (Lys-Gly) (interchain with G-Cter in SUMO2)). Disordered stretches follow at residues 593 to 696 (ISET…GERR), 713 to 734 (RKHQ…RSST), 756 to 836 (QRHA…VAGG), 853 to 876 (GGSR…ASEG), and 947 to 984 (QTAP…GDVG). The segment covering 604–627 (SGEEVEESEEEEEEEEEEDQEDQE) has biased composition (acidic residues). Positions 628–637 (ESKAGGEDQL) are enriched in basic and acidic residues. 2 consecutive C2H2-type zinc fingers follow at residues 697–719 (HRCG…QEAH) and 736–758 (FTCP…GQRH). 2 positions are modified to phosphothreonine; by HIPK2: T766 and T768. Low complexity predominate over residues 807–819 (AAAAAAEASESAS). The segment covering 948 to 966 (TAPPTPPTPPPPLPLPVPP) has biased composition (pro residues). T955 carries the phosphothreonine; by HIPK2 modification.

Interacts with HIPK2. Interacts with CBFA2T3. Interacts with ZBTB38. In terms of processing, phosphorylated by HIPK2. This phosphorylation reduces stability and triggers ZBTB4 protein degradation in response to DNA damage.

It is found in the nucleus. The protein localises to the chromosome. Its function is as follows. Transcriptional repressor with bimodal DNA-binding specificity. Represses transcription in a methyl-CpG-dependent manner. Binds with a higher affinity to methylated CpG dinucleotides in the consensus sequence 5'-CGCG-3' but can also bind to the non-methylated consensus sequence 5'-CTGCNA-3' also known as the consensus kaiso binding site (KBS). Can also bind specifically to a single methyl-CpG pair and can bind hemimethylated DNA but with a lower affinity compared to methylated DNA. Plays a role in postnatal myogenesis, may be involved in the regulation of satellite cells self-renewal. This chain is Zinc finger and BTB domain-containing protein 4 (Zbtb4), found in Rattus norvegicus (Rat).